Consider the following 254-residue polypeptide: Phosphomannomutase (254 aa).

Asp-19 functions as the Nucleophile in the catalytic mechanism. Asp-19 and Asp-21 together coordinate Mg(2+). The active-site Proton donor/acceptor is the Asp-21. 6 residues coordinate alpha-D-mannose 1-phosphate: Arg-28, Arg-130, Arg-141, Arg-148, Ser-186, and Asp-188. Mg(2+) contacts are provided by Asp-216, Phe-228, Asp-230, and Thr-233. Ser-240 carries the phosphoserine modification.

Belongs to the eukaryotic PMM family. Homodimer.

It localises to the cytoplasm. It catalyses the reaction alpha-D-mannose 1-phosphate = D-mannose 6-phosphate. It participates in nucleotide-sugar biosynthesis; GDP-alpha-D-mannose biosynthesis; alpha-D-mannose 1-phosphate from D-fructose 6-phosphate: step 2/2. Involved in the synthesis of the GDP-mannose and dolichol-phosphate-mannose required for a number of critical mannosyl transfer reactions such as folding and glycosylation of secretory proteins in the ER lumen. The chain is Phosphomannomutase from Saccharomyces cerevisiae (strain ATCC 204508 / S288c) (Baker's yeast).